We begin with the raw amino-acid sequence, 485 residues long: Adenosylhomocysteinase (485 aa).

Threonine 64, aspartate 139, and glutamate 205 together coordinate substrate. 206–208 (TTT) lines the NAD(+) pocket. Substrate contacts are provided by lysine 235 and aspartate 239. NAD(+) contacts are provided by residues asparagine 240, 269–274 (GYGDVG), glutamate 292, asparagine 327, 348–350 (IGH), and asparagine 397.

This sequence belongs to the adenosylhomocysteinase family. Requires NAD(+) as cofactor.

The enzyme catalyses S-adenosyl-L-homocysteine + H2O = L-homocysteine + adenosine. The protein operates within amino-acid biosynthesis; L-homocysteine biosynthesis; L-homocysteine from S-adenosyl-L-homocysteine: step 1/1. Its function is as follows. Adenosylhomocysteine is a competitive inhibitor of S-adenosyl-L-methionine-dependent methyl transferase reactions; therefore adenosylhomocysteinase may play a key role in the control of methylations via regulation of the intracellular concentration of adenosylhomocysteine. The sequence is that of Adenosylhomocysteinase (SAHH) from Phalaenopsis sp. (Moth orchid).